The following is a 4363-amino-acid chain: AM-toxin synthetase AMT1 (4363 aa).

The segment at 278 to 670 (AGQAKQRPHA…GSLLYVGRKD (393 aa)) is adenylation 1. Residues 810–887 (APDSVIARQL…ALAAIAKVIP (78 aa)) enclose the Carrier 1 domain. Serine 847 is subject to O-(pantetheine 4'-phosphoryl)serine. The interval 926-1340 (EDVYACTPLQ…TLGQIDVLTS (415 aa)) is condensation 1. Residues 1368–1765 (KQARTRPGAI…LGRKDTQIKI (398 aa)) form an adenylation 2 region. The 78-residue stretch at 1884–1961 (PPVTDMEKHV…DQARHVTLLT (78 aa)) folds into the Carrier 2 domain. Serine 1922 bears the O-(pantetheine 4'-phosphoryl)serine mark. Residues 1999–2410 (EDVYPCTPLQ…ASPSSSTLVS (412 aa)) form a condensation 2 region. The tract at residues 2448–2853 (RKKALAAPQA…GRKDNQVKIR (406 aa)) is adenylation 3. The Carrier 3 domain occupies 2977–3053 (LPSTVMEETL…DLAACCTDRR (77 aa)). An O-(pantetheine 4'-phosphoryl)serine modification is found at serine 3014. Positions 3098–3503 (VEDVYPCTPM…ELVSSIETLN (406 aa)) are condensation 3. Residues 3730-3806 (PAVTAMQLAI…SLAVRATENT (77 aa)) enclose the Carrier 4 domain. Serine 3767 is modified (O-(pantetheine 4'-phosphoryl)serine). The interval 3850–4204 (QDVLPCTSMQ…GLDEIVEHYA (355 aa)) is condensation 4.

It belongs to the NRP synthetase family.

Its pathway is mycotoxin biosynthesis. Its function is as follows. Nonribosomal peptide synthetase; part of the gene clusters that mediate the biosynthesis of AM-toxins, host-selective toxins (HSTs) causing Alternaria blotch on apple, a worldwide distributed disease. AM-toxins are cyclic depsipeptides containing the 3 residues 2-hydroxy-isovaleric acid (2-HIV), dehydroalanine, L-alanine which are common for all 3 AM-toxins I to III. The fourth precursor is L-alpha-amino-methoxyphenyl-valeric acid (L-Amv) for AM-toxin I, L-alpha-amino-phenyl-valeric acid (L-Apv) for AM-toxin II, and L-alpha-amino-hydroxyphenyl-valeric acid (L-Ahv) for AM-toxin III. AM-toxins have two target sites for affecting susceptible apple cells; they cause invagination of the plasma membrane and electrolyte loss, and chloroplast disorganization. The non-ribosomal peptide synthetase AMT1 contains 4 catalytic modules and is responsible for activation of each residue in AM-toxin. The aldo-keto reductase AMT2 catalyzes the conversion of 2-keto-isovaleric acid (2-KIV) to 2-hydroxy-isovaleric acid (2-HIV), one of the precursor residues incorporated by AMT1 during AM-toxin biosynthesis, by reduction of its ketone to an alcohol. The cytochrome P450 monooxygenase AMT3 and the thioesterase AMT4 are also important for AM-toxin production, but their exact function within the AM-toxin biosynthesis are not known yet. Up to 21 proteins (including AMT1 to AMT4) are predicted to be involved in AM-toxin biosynthesis since their expression ishighly up-regulated in AM-toxin-producing cultures. This is AM-toxin synthetase AMT1 from Alternaria alternata (Alternaria rot fungus).